The sequence spans 206 residues: Protein 6b (206 aa).

Residues 162–182 (YTEQAEEEEEEEEEEEEEEVL) form a disordered region. Residues 165-182 (QAEEEEEEEEEEEEEEVL) show a composition bias toward acidic residues.

Functionally, involved in tumor formation and increases auxin and cytokinin effects in host plants. The sequence is that of Protein 6b (6b) from Allorhizobium ampelinum (strain ATCC BAA-846 / DSM 112012 / S4) (Agrobacterium vitis (strain S4)).